A 230-amino-acid chain; its full sequence is 2,3-bisphosphoglycerate-dependent phosphoglycerate mutase (230 aa).

Residues arginine 8–asparagine 15, threonine 21–glycine 22, arginine 60, glutamate 87–tyrosine 90, lysine 98, arginine 114–arginine 115, and glycine 183–asparagine 184 contribute to the substrate site. Residue histidine 9 is the Tele-phosphohistidine intermediate of the active site. Catalysis depends on glutamate 87, which acts as the Proton donor/acceptor.

This sequence belongs to the phosphoglycerate mutase family. BPG-dependent PGAM subfamily.

It carries out the reaction (2R)-2-phosphoglycerate = (2R)-3-phosphoglycerate. The protein operates within carbohydrate degradation; glycolysis; pyruvate from D-glyceraldehyde 3-phosphate: step 3/5. Functionally, catalyzes the interconversion of 2-phosphoglycerate and 3-phosphoglycerate. This is 2,3-bisphosphoglycerate-dependent phosphoglycerate mutase from Lactobacillus acidophilus (strain ATCC 700396 / NCK56 / N2 / NCFM).